The chain runs to 92 residues: CRISPR-associated endoribonuclease Cas2 (92 aa).

Aspartate 9 is a Mg(2+) binding site.

It belongs to the CRISPR-associated endoribonuclease Cas2 protein family. In terms of assembly, homodimer, forms a heterotetramer with a Cas1 homodimer. The cofactor is Mg(2+).

Functionally, CRISPR (clustered regularly interspaced short palindromic repeat), is an adaptive immune system that provides protection against mobile genetic elements (viruses, transposable elements and conjugative plasmids). CRISPR clusters contain sequences complementary to antecedent mobile elements and target invading nucleic acids. CRISPR clusters are transcribed and processed into CRISPR RNA (crRNA). Functions as a ssRNA-specific endoribonuclease. Involved in the integration of spacer DNA into the CRISPR cassette. The polypeptide is CRISPR-associated endoribonuclease Cas2 (Aeropyrum pernix (strain ATCC 700893 / DSM 11879 / JCM 9820 / NBRC 100138 / K1)).